A 1142-amino-acid chain; its full sequence is Error-prone DNA polymerase (1142 aa).

The interval T291–R361 is disordered. 2 stretches are compositionally biased toward low complexity: residues L311 to P320 and G327 to P344. Positions G345 to A355 are enriched in gly residues.

Belongs to the DNA polymerase type-C family. DnaE2 subfamily.

It is found in the cytoplasm. The catalysed reaction is DNA(n) + a 2'-deoxyribonucleoside 5'-triphosphate = DNA(n+1) + diphosphate. DNA polymerase involved in damage-induced mutagenesis and translesion synthesis (TLS). It is not the major replicative DNA polymerase. The protein is Error-prone DNA polymerase of Anaeromyxobacter dehalogenans (strain 2CP-1 / ATCC BAA-258).